A 180-amino-acid chain; its full sequence is Protein sll1483 (180 aa).

The first 26 residues, 1-26 (MKTAARIVAFTALTGFALGMPTVAMA), serve as a signal peptide directing secretion. An FAS1 domain is found at 45-176 (AMTIVEVAAG…GVIHVIDQVI (132 aa)).

This is Protein sll1483 from Synechocystis sp. (strain ATCC 27184 / PCC 6803 / Kazusa).